We begin with the raw amino-acid sequence, 329 residues long: Transaldolase (329 aa).

The Schiff-base intermediate with substrate role is filled by Lys-136.

Belongs to the transaldolase family. Type 1 subfamily. In terms of assembly, homodimer.

The protein resides in the cytoplasm. It catalyses the reaction D-sedoheptulose 7-phosphate + D-glyceraldehyde 3-phosphate = D-erythrose 4-phosphate + beta-D-fructose 6-phosphate. It functions in the pathway carbohydrate degradation; pentose phosphate pathway; D-glyceraldehyde 3-phosphate and beta-D-fructose 6-phosphate from D-ribose 5-phosphate and D-xylulose 5-phosphate (non-oxidative stage): step 2/3. Its function is as follows. Transaldolase is important for the balance of metabolites in the pentose-phosphate pathway. This Methylococcus capsulatus (strain ATCC 33009 / NCIMB 11132 / Bath) protein is Transaldolase.